A 266-amino-acid chain; its full sequence is Undecaprenyl-diphosphatase (266 aa).

8 consecutive transmembrane segments (helical) span residues 1 to 21 (MDTFQVIILALIQGLTEFLPI), 39 to 59 (QGLSFDVAVNTGSLLAVVMYF), 87 to 107 (WWIILATIPAVIVGFSAKGFI), 111 to 131 (FRSIEVIAATTIIFGLLLWWA), 144 to 164 (VGWKKALVIGIAQAMALIPGT), 183 to 203 (AAARFSFLMSVPVSLGAAILV), 218 to 238 (ALGLGIVVSFIAAYICIHYFL), and 246 to 266 (MTPFVVYRLALGAVLCGFIFL).

It belongs to the UppP family.

The protein resides in the cell inner membrane. The catalysed reaction is di-trans,octa-cis-undecaprenyl diphosphate + H2O = di-trans,octa-cis-undecaprenyl phosphate + phosphate + H(+). Its function is as follows. Catalyzes the dephosphorylation of undecaprenyl diphosphate (UPP). Confers resistance to bacitracin. This is Undecaprenyl-diphosphatase from Shewanella halifaxensis (strain HAW-EB4).